The chain runs to 326 residues: Meso-diaminopimelate D-dehydrogenase (326 aa).

NADP(+)-binding positions include 11–14 (YGNL), 35–37 (TRR), 69–72 (CGGS), 92–94 (SFD), and 121–125 (VGWDP). Substrate contacts are provided by residues aspartate 94, aspartate 124, tryptophan 148, 154-155 (QG), threonine 173, arginine 199, histidine 249, and asparagine 276.

Belongs to the diaminopimelate dehydrogenase family. In terms of assembly, homodimer.

The enzyme catalyses meso-2,6-diaminopimelate + NADP(+) + H2O = (S)-2-amino-6-oxoheptanedioate + NH4(+) + NADPH + H(+). It functions in the pathway amino-acid biosynthesis; L-lysine biosynthesis via DAP pathway; DL-2,6-diaminopimelate from (S)-tetrahydrodipicolinate: step 1/1. With respect to regulation, the enzyme is completely inhibited by p-chloromercuribenzoate and HgCl(2) in vitro. Thioglycollate, L-cysteine and Cu(2+) also strongly inhibit the enzyme. In terms of biological role, catalyzes the reversible NADPH-dependent reductive amination of L-2-amino-6-oxopimelate, the acyclic form of L-tetrahydrodipicolinate, to generate the meso compound, D,L-2,6-diaminopimelate. Probably plays a role in lysine biosynthesis. Is highly specific for meso-2,6-diaminopimelate as the electron donor, since the following amino acids are inert for the oxidative deamination reaction: DL-2-aminopimelate, D-glutamate, L-glutamate, D-aspartate, L-aspartate, D-alanine, L-alanine, D-valine, L-valine, D-lysine, L-lysine, D-phenylalanine, L-phenylalanine, D-leucine, L-leucine, D-threonine, L-threonine, D-serine, L-serine, D-tryptophan, L-tryptophan, D-cysteine, L-cysteine, D-histidine, L-histidine, D-methionine, D-arginine, D-proline, D-asparagine, D-glutamine, D-isoleucine and D-ornithine. Moreover, exclusively uses NADP as the electron acceptor for the oxidative deamination of meso-DAP; NAD is inert. The polypeptide is Meso-diaminopimelate D-dehydrogenase (ddh) (Ureibacillus thermosphaericus).